The primary structure comprises 393 residues: Ig heavy chain C region (393 aa).

Ig-like domains lie at 63–157, 168–260, and 270–370; these read PTVI…RNIT, PVIK…ASIH, and PSVS…RTVN. N-linked (GlcNAc...) asparagine glycans are attached at residues Asn-119, Asn-155, Asn-200, Asn-230, Asn-329, Asn-366, Asn-370, and Asn-380.

This Heterodontus francisci (Horn shark) protein is Ig heavy chain C region.